The following is a 224-amino-acid chain: C-reactive protein (224 aa).

The N-terminal stretch at 1–18 is a signal peptide; that stretch reads MEKLLCFLVLTSLSHAFG. At Gln-19 the chain carries Pyrrolidone carboxylic acid. In terms of domain architecture, Pentraxin (PTX) spans 23 to 224; it reads SRKAFVFPKE…EVFTKPQLWP (202 aa). Cysteines 54 and 115 form a disulfide. The Ca(2+) site is built by Asp-78, Asn-79, Glu-156, Gln-157, Asp-158, and Gln-168.

The protein belongs to the pentraxin family. In terms of assembly, homopentamer. Pentraxin (or pentaxin) have a discoid arrangement of 5 non-covalently bound subunits. Interacts with FCN1; may regulate monocyte activation by FCN1. It depends on Ca(2+) as a cofactor. Found in plasma.

Its subcellular location is the secreted. Its function is as follows. Displays several functions associated with host defense: it promotes agglutination, bacterial capsular swelling, phagocytosis and complement fixation through its calcium-dependent binding to phosphorylcholine. Can interact with DNA and histones and may scavenge nuclear material released from damaged circulating cells. The chain is C-reactive protein (CRP) from Homo sapiens (Human).